Consider the following 358-residue polypeptide: tRNA(Ile)-lysidine synthase (358 aa).

35–40 (SGGPDS) contacts ATP.

The protein belongs to the tRNA(Ile)-lysidine synthase family.

The protein localises to the cytoplasm. It carries out the reaction cytidine(34) in tRNA(Ile2) + L-lysine + ATP = lysidine(34) in tRNA(Ile2) + AMP + diphosphate + H(+). Functionally, ligates lysine onto the cytidine present at position 34 of the AUA codon-specific tRNA(Ile) that contains the anticodon CAU, in an ATP-dependent manner. Cytidine is converted to lysidine, thus changing the amino acid specificity of the tRNA from methionine to isoleucine. The protein is tRNA(Ile)-lysidine synthase of Bradyrhizobium sp. (strain BTAi1 / ATCC BAA-1182).